Here is a 274-residue protein sequence, read N- to C-terminus: Ribosomal RNA small subunit methyltransferase A (274 aa).

Positions 15, 17, 42, 64, 89, and 109 each coordinate S-adenosyl-L-methionine.

The protein belongs to the class I-like SAM-binding methyltransferase superfamily. rRNA adenine N(6)-methyltransferase family. RsmA subfamily.

The protein resides in the cytoplasm. The enzyme catalyses adenosine(1518)/adenosine(1519) in 16S rRNA + 4 S-adenosyl-L-methionine = N(6)-dimethyladenosine(1518)/N(6)-dimethyladenosine(1519) in 16S rRNA + 4 S-adenosyl-L-homocysteine + 4 H(+). Functionally, specifically dimethylates two adjacent adenosines (A1518 and A1519) in the loop of a conserved hairpin near the 3'-end of 16S rRNA in the 30S particle. May play a critical role in biogenesis of 30S subunits. In Synechococcus sp. (strain RCC307), this protein is Ribosomal RNA small subunit methyltransferase A.